We begin with the raw amino-acid sequence, 148 residues long: Hemoglobin subunit beta-1 (148 aa).

A Globin domain is found at 3–148 (EWTDAERTAI…VVSALCRQYH (146 aa)). H64 and H93 together coordinate heme b.

Heterotetramer of two alpha chains and two beta chains. In terms of tissue distribution, red blood cells.

Functionally, involved in oxygen transport from gills to the various peripheral tissues. The protein is Hemoglobin subunit beta-1 (ba1) of Danio rerio (Zebrafish).